Here is a 377-residue protein sequence, read N- to C-terminus: Nitric oxide reductase FlRd-NAD(+) reductase (377 aa).

It belongs to the FAD-dependent oxidoreductase family. FAD is required as a cofactor.

Its subcellular location is the cytoplasm. The enzyme catalyses 2 reduced [nitric oxide reductase rubredoxin domain] + NAD(+) + H(+) = 2 oxidized [nitric oxide reductase rubredoxin domain] + NADH. It functions in the pathway nitrogen metabolism; nitric oxide reduction. In terms of biological role, one of at least two accessory proteins for anaerobic nitric oxide (NO) reductase. Reduces the rubredoxin moiety of NO reductase. The polypeptide is Nitric oxide reductase FlRd-NAD(+) reductase (Salmonella gallinarum (strain 287/91 / NCTC 13346)).